The sequence spans 162 residues: NADH-quinone oxidoreductase subunit I (162 aa).

4Fe-4S ferredoxin-type domains lie at 54 to 83 (RRYE…IESE) and 93 to 122 (TRYD…ETQI). [4Fe-4S] cluster is bound by residues cysteine 63, cysteine 66, cysteine 69, cysteine 73, cysteine 102, cysteine 105, cysteine 108, and cysteine 112.

Belongs to the complex I 23 kDa subunit family. NDH-1 is composed of 14 different subunits. Subunits NuoA, H, J, K, L, M, N constitute the membrane sector of the complex. Requires [4Fe-4S] cluster as cofactor.

It localises to the cell inner membrane. The catalysed reaction is a quinone + NADH + 5 H(+)(in) = a quinol + NAD(+) + 4 H(+)(out). Functionally, NDH-1 shuttles electrons from NADH, via FMN and iron-sulfur (Fe-S) centers, to quinones in the respiratory chain. The immediate electron acceptor for the enzyme in this species is believed to be ubiquinone. Couples the redox reaction to proton translocation (for every two electrons transferred, four hydrogen ions are translocated across the cytoplasmic membrane), and thus conserves the redox energy in a proton gradient. The protein is NADH-quinone oxidoreductase subunit I of Burkholderia cenocepacia (strain HI2424).